Reading from the N-terminus, the 451-residue chain is MNLEVKKIDTANARLSAKPSIEDLEKRYDKIAQKIAQKVKIDGFRRGKVPLSLVKTRYQAQIEQDAQEEMIQEVLKNALKELGVETKDLIGSPNFTKFEKKDTHFEIEADIGLKPTIVLDKIQECVPSVGVEVPNEEKVNERLKQLAKDYAKFVDTDSQRKAQNDDKLTIDFEGFIDNAPFEGGKAENFSLILGSKQMLEDFEKALLGMQASEEKEFPLTFPSGYHAEHLAGKEALFKVKLRQIQVREALEINDELAKIVLANEENATLELLKERVKGQLFLENKARLYNEELKEKLIENLDEKILFDLPKTIIEQEMDLLFRNALYSMQAEEVKSLQDSQEKAKEKRESFRNDATKSVKITFVIDALAKEEKIGVHDNEVFQTLYYEAMMTGQNPENLIEQYRKNNMLAAVKMAMIEDRVLAYLLDKNLPKEQQEILEKMRPNAQKTQVG.

Positions 165 to 250 constitute a PPIase FKBP-type domain; it reads DDKLTIDFEG…LRQIQVREAL (86 aa).

This sequence belongs to the FKBP-type PPIase family. Tig subfamily.

It localises to the cytoplasm. It carries out the reaction [protein]-peptidylproline (omega=180) = [protein]-peptidylproline (omega=0). In terms of biological role, involved in protein export. Acts as a chaperone by maintaining the newly synthesized protein in an open conformation. Functions as a peptidyl-prolyl cis-trans isomerase. The chain is Trigger factor (tig) from Helicobacter pylori (strain J99 / ATCC 700824) (Campylobacter pylori J99).